A 270-amino-acid polypeptide reads, in one-letter code: Fluoride-specific ion channel FluC 2 (270 aa).

The next 4 membrane-spanning stretches (helical) occupy residues 4–24, 35–55, 67–87, and 96–116; these read IIIL…FIML, LDIL…TALY, IIGT…YGSV, and AFLI…VAVL. The Na(+) site is built by glycine 74 and serine 77.

It belongs to the fluoride channel Fluc/FEX (TC 1.A.43) family.

It is found in the cell inner membrane. The catalysed reaction is fluoride(in) = fluoride(out). Its activity is regulated as follows. Na(+) is not transported, but it plays an essential structural role and its presence is essential for fluoride channel function. Functionally, fluoride-specific ion channel. Important for reducing fluoride concentration in the cell, thus reducing its toxicity. In Brucella melitensis biotype 1 (strain ATCC 23456 / CCUG 17765 / NCTC 10094 / 16M), this protein is Fluoride-specific ion channel FluC 2.